A 105-amino-acid chain; its full sequence is Met repressor (105 aa).

Belongs to the MetJ family. As to quaternary structure, homodimer.

It localises to the cytoplasm. This regulatory protein, when combined with SAM (S-adenosylmethionine) represses the expression of the methionine regulon and of enzymes involved in SAM synthesis. This chain is Met repressor, found in Salmonella dublin (strain CT_02021853).